A 292-amino-acid polypeptide reads, in one-letter code: MDKVKIALQYMLPKHLLSRLVGKLAASEAGALTTAAIKWFIKQYKIDMSEAAQSEPEAYKSFNDFFTRALKPGIRPINTAANIMVHPVDGAVSQLGPIKDGRIFQAKGHHYSSLTLLGDQAEDAKRFEGGDFATIYLAPKDYHRIHMPIKGTLSKMTYVPGELFSVNPLTARHVPGLFARNERVVAIFETELGPLAMVLVGATIVASIETVWAGTITPPTGKQVFTWEYPTVGPDAITLDKGEEMGRFKLGSTVVMLFAKEAIDTFAEGVEPEAVTRMGQAFANLKDQSSAD.

Catalysis depends on charge relay system; for autoendoproteolytic cleavage activity residues Asp-89, His-146, and Ser-252. The active-site Schiff-base intermediate with substrate; via pyruvic acid; for decarboxylase activity is the Ser-252. Position 252 is a pyruvic acid (Ser); by autocatalysis (Ser-252).

It belongs to the phosphatidylserine decarboxylase family. PSD-B subfamily. Prokaryotic type I sub-subfamily. As to quaternary structure, heterodimer of a large membrane-associated beta subunit and a small pyruvoyl-containing alpha subunit. Requires pyruvate as cofactor. In terms of processing, is synthesized initially as an inactive proenzyme. Formation of the active enzyme involves a self-maturation process in which the active site pyruvoyl group is generated from an internal serine residue via an autocatalytic post-translational modification. Two non-identical subunits are generated from the proenzyme in this reaction, and the pyruvate is formed at the N-terminus of the alpha chain, which is derived from the carboxyl end of the proenzyme. The autoendoproteolytic cleavage occurs by a canonical serine protease mechanism, in which the side chain hydroxyl group of the serine supplies its oxygen atom to form the C-terminus of the beta chain, while the remainder of the serine residue undergoes an oxidative deamination to produce ammonia and the pyruvoyl prosthetic group on the alpha chain. During this reaction, the Ser that is part of the protease active site of the proenzyme becomes the pyruvoyl prosthetic group, which constitutes an essential element of the active site of the mature decarboxylase.

It is found in the cell membrane. It catalyses the reaction a 1,2-diacyl-sn-glycero-3-phospho-L-serine + H(+) = a 1,2-diacyl-sn-glycero-3-phosphoethanolamine + CO2. Its pathway is phospholipid metabolism; phosphatidylethanolamine biosynthesis; phosphatidylethanolamine from CDP-diacylglycerol: step 2/2. In terms of biological role, catalyzes the formation of phosphatidylethanolamine (PtdEtn) from phosphatidylserine (PtdSer). This is Phosphatidylserine decarboxylase proenzyme from Shewanella sp. (strain MR-4).